Reading from the N-terminus, the 232-residue chain is Large ribosomal subunit protein uL1 (232 aa).

The protein belongs to the universal ribosomal protein uL1 family. Part of the 50S ribosomal subunit.

Its function is as follows. Binds directly to 23S rRNA. The L1 stalk is quite mobile in the ribosome, and is involved in E site tRNA release. In terms of biological role, protein L1 is also a translational repressor protein, it controls the translation of the L11 operon by binding to its mRNA. The polypeptide is Large ribosomal subunit protein uL1 (Chlamydia abortus (strain DSM 27085 / S26/3) (Chlamydophila abortus)).